The primary structure comprises 151 residues: MTLRLDSLKANKGARRRKLRKGRGIAAGQGASCGFGMRGQKSRSGRPTRPGFEGGQMPLYRRVPKLKHFPLVNPKHFTVLNVSALKDLKDGATVNLDSLVKDGIVTSPKHPLKMLGNGELTVKNLTVQASAFTTSARTKIEAAGGTCETLD.

Positions 1-57 (MTLRLDSLKANKGARRRKLRKGRGIAAGQGASCGFGMRGQKSRSGRPTRPGFEGGQM) are disordered. The span at 12-23 (KGARRRKLRKGR) shows a compositional bias: basic residues. The span at 25–37 (IAAGQGASCGFGM) shows a compositional bias: gly residues.

The protein belongs to the universal ribosomal protein uL15 family. As to quaternary structure, part of the 50S ribosomal subunit.

In terms of biological role, binds to the 23S rRNA. The sequence is that of Large ribosomal subunit protein uL15 from Synechococcus sp. (strain CC9902).